The chain runs to 90 residues: uncharacterized protein (90 aa).

2 helical membrane passes run 17–37 and 55–75; these read ILSM…IYLV and ICFG…WGIA.

It is found in the membrane. This is an uncharacterized protein from Schizosaccharomyces pombe (strain 972 / ATCC 24843) (Fission yeast).